The chain runs to 1403 residues: Centrosomal protein of 162 kDa (1403 aa).

The disordered stretch occupies residues 19 to 44 (ELSDDSFENSNETPSQPNKDRKKKDT). The segment covering 26-35 (ENSNETPSQP) has biased composition (polar residues). Phosphoserine is present on residues Ser156 and Ser159. Disordered regions lie at residues 171–235 (NVEP…EKTG), 305–342 (DTGE…TTES), and 449–586 (NPSL…SDDS). Basic and acidic residues predominate over residues 176–189 (EGGRENESEHKELP). Acidic residues predominate over residues 192 to 204 (YSDDFEDAEDTDE). Residues 206 to 220 (LITKDEETRPKENPE) are compositionally biased toward basic and acidic residues. Residues 449 to 466 (NPSLLPQDNKANQTSRSR) show a composition bias toward polar residues. Ser468 bears the Phosphoserine mark. A compositionally biased stretch (basic residues) spans 481–496 (PCKKARSAPPLPRRKP). The segment covering 504 to 517 (ARSSGYSKPSSPLQ) has biased composition (polar residues). Basic and acidic residues-rich tracts occupy residues 522–532 (LEKKTSKDNTK) and 567–581 (PHRE…RPED). 3 coiled-coil regions span residues 610 to 1120 (KRAQ…MLSR), 1170 to 1205 (EVLE…QLES), and 1234 to 1385 (CQNA…LHRQ).

The protein belongs to the CEP162 family. As to quaternary structure, interacts with alpha-tubulin. Interacts with CPNE4. Interacts with CEP290.

Its subcellular location is the cytoplasm. The protein localises to the cytoskeleton. It localises to the microtubule organizing center. It is found in the centrosome. The protein resides in the centriole. Its subcellular location is the spindle. The protein localises to the nucleus. Its function is as follows. Required to promote assembly of the transition zone in primary cilia. Acts by specifically recognizing and binding the axonemal microtubule. Localizes to the distal ends of centrioles before ciliogenesis and directly binds to axonemal microtubule, thereby promoting and restricting transition zone formation specifically at the cilia base. Required to mediate CEP290 association with microtubules. This Rattus norvegicus (Rat) protein is Centrosomal protein of 162 kDa (Cep162).